We begin with the raw amino-acid sequence, 87 residues long: NADH dehydrogenase [ubiquinone] 1 alpha subcomplex subunit 4-like 2 (87 aa).

This sequence belongs to the complex I NDUFA4 subunit family.

This Bos taurus (Bovine) protein is NADH dehydrogenase [ubiquinone] 1 alpha subcomplex subunit 4-like 2 (NDUFA4L2).